The primary structure comprises 202 residues: ATP-dependent Clp protease proteolytic subunit (202 aa).

Catalysis depends on serine 106, which acts as the Nucleophile. Histidine 131 is a catalytic residue.

Belongs to the peptidase S14 family. As to quaternary structure, fourteen ClpP subunits assemble into 2 heptameric rings which stack back to back to give a disk-like structure with a central cavity, resembling the structure of eukaryotic proteasomes.

It is found in the cytoplasm. The enzyme catalyses Hydrolysis of proteins to small peptides in the presence of ATP and magnesium. alpha-casein is the usual test substrate. In the absence of ATP, only oligopeptides shorter than five residues are hydrolyzed (such as succinyl-Leu-Tyr-|-NHMec, and Leu-Tyr-Leu-|-Tyr-Trp, in which cleavage of the -Tyr-|-Leu- and -Tyr-|-Trp bonds also occurs).. Its function is as follows. Cleaves peptides in various proteins in a process that requires ATP hydrolysis. Has a chymotrypsin-like activity. Plays a major role in the degradation of misfolded proteins. This is ATP-dependent Clp protease proteolytic subunit from Paracidovorax citrulli (strain AAC00-1) (Acidovorax citrulli).